The following is a 208-amino-acid chain: Uracil phosphoribosyltransferase (208 aa).

Residues arginine 78, arginine 103, and 130–138 (DPMLATGGS) each bind 5-phospho-alpha-D-ribose 1-diphosphate. Uracil-binding positions include isoleucine 193 and 198 to 200 (GDA). Aspartate 199 contributes to the 5-phospho-alpha-D-ribose 1-diphosphate binding site.

Belongs to the UPRTase family. Requires Mg(2+) as cofactor.

The enzyme catalyses UMP + diphosphate = 5-phospho-alpha-D-ribose 1-diphosphate + uracil. Its pathway is pyrimidine metabolism; UMP biosynthesis via salvage pathway; UMP from uracil: step 1/1. Allosterically activated by GTP. Its function is as follows. Catalyzes the conversion of uracil and 5-phospho-alpha-D-ribose 1-diphosphate (PRPP) to UMP and diphosphate. This chain is Uracil phosphoribosyltransferase, found in Haemophilus influenzae (strain 86-028NP).